The following is a 210-amino-acid chain: Phosphate propanoyltransferase (210 aa).

Residue Val26–Asn28 participates in CoA binding. Residues His30 and His32 each coordinate Zn(2+). CoA-binding residues include Lys71 and Arg78. Arg84 serves as a coordination point for phosphate. Residues Glu90, His138, His140, and His186 each contribute to the Zn(2+) site. A CoA-binding site is contributed by Asn193.

The protein belongs to the PduL family. In terms of assembly, monomer, when purified in the absence of the encapsulation peptide (EP, residues 1-27). The EP may influence oligomerization. It depends on Zn(2+) as a cofactor.

The protein localises to the bacterial microcompartment. The catalysed reaction is propanoyl-CoA + phosphate = propanoyl phosphate + CoA. The protein operates within polyol metabolism; 1,2-propanediol degradation. In terms of biological role, involved in 1,2-propanediol (1,2-PD) utilization in the bacterial microcompartment (BMC) dedicated to 1,2-PD degradation by catalyzing the conversion of propanoyl-CoA to propanoyl-phosphate. Also able to catalyze the reverse reaction. Also has phosphate acetyltransferase activity to a lesser extent. Required for optimal growth on 1,2-PD when the BMC is intact. CoA is regenerated within the BMC (for use by PduP) via this enzyme, although there must also be cofactor transport across the BMC. Directly targeted to the BMC. Its function is as follows. The 1,2-PD-specific bacterial microcompartment (BMC) concentrates low levels of 1,2-PD catabolic enzymes, concentrates volatile reaction intermediates thus enhancing pathway flux and keeps the level of toxic, mutagenic propionaldehyde low. This chain is Phosphate propanoyltransferase, found in Salmonella typhimurium (strain LT2 / SGSC1412 / ATCC 700720).